A 327-amino-acid polypeptide reads, in one-letter code: Undecaprenyl-phosphate 4-deoxy-4-formamido-L-arabinose transferase (327 aa).

2 helical membrane-spanning segments follow: residues leucine 236–valine 256 and valine 270–leucine 290.

This sequence belongs to the glycosyltransferase 2 family.

The protein resides in the cell inner membrane. The catalysed reaction is UDP-4-deoxy-4-formamido-beta-L-arabinose + di-trans,octa-cis-undecaprenyl phosphate = 4-deoxy-4-formamido-alpha-L-arabinopyranosyl di-trans,octa-cis-undecaprenyl phosphate + UDP. The protein operates within glycolipid biosynthesis; 4-amino-4-deoxy-alpha-L-arabinose undecaprenyl phosphate biosynthesis; 4-amino-4-deoxy-alpha-L-arabinose undecaprenyl phosphate from UDP-4-deoxy-4-formamido-beta-L-arabinose and undecaprenyl phosphate: step 1/2. It participates in bacterial outer membrane biogenesis; lipopolysaccharide biosynthesis. In terms of biological role, catalyzes the transfer of 4-deoxy-4-formamido-L-arabinose from UDP to undecaprenyl phosphate. The modified arabinose is attached to lipid A and is required for resistance to polymyxin and cationic antimicrobial peptides. The chain is Undecaprenyl-phosphate 4-deoxy-4-formamido-L-arabinose transferase from Enterobacter sp. (strain 638).